Here is a 310-residue protein sequence, read N- to C-terminus: MFQHETVLLKETVDGLNVKEDGTYVDCTLGGAGHSSYLLSQLSEKGTLIGFDQDDAALDHAREKLAGSKANILFIKSNFRYLKERLNEQGITSVDGVIFDLGVSSPQLDTPERGFSYHHDAPLDMRMDQSAALSAKKVVNEWPFEDLVRIFYKYGEEKFSKQIARKIEEARKKAPIETTGELVDIIKEGIPAPARRTGGHPAKRVFQAIRIAVNDELKVFEEALEQAIELLNPKGRISVITFHSLEDRICKSTFREMSSLPELPHGLPVIPEGLEPKLKLITRKPIVASEQELEHNNRARSAKLRIAEKK.

S-adenosyl-L-methionine-binding positions include Ala-32–His-34, Asp-52, Phe-79, Asp-100, and Gln-107.

Belongs to the methyltransferase superfamily. RsmH family.

It is found in the cytoplasm. The enzyme catalyses cytidine(1402) in 16S rRNA + S-adenosyl-L-methionine = N(4)-methylcytidine(1402) in 16S rRNA + S-adenosyl-L-homocysteine + H(+). Specifically methylates the N4 position of cytidine in position 1402 (C1402) of 16S rRNA. This Bacillus pumilus (strain SAFR-032) protein is Ribosomal RNA small subunit methyltransferase H.